We begin with the raw amino-acid sequence, 122 residues long: S-adenosylmethionine decarboxylase proenzyme (122 aa).

The active-site Schiff-base intermediate with substrate; via pyruvic acid is Ser69. Ser69 carries the pyruvic acid (Ser); by autocatalysis modification. His74 functions as the Proton acceptor; for processing activity in the catalytic mechanism. Residue Cys89 is the Proton donor; for catalytic activity of the active site.

The protein belongs to the prokaryotic AdoMetDC family. Type 1 subfamily. Heterotetramer of two alpha and two beta chains arranged as a dimer of alpha/beta heterodimers. It depends on pyruvate as a cofactor. Post-translationally, is synthesized initially as an inactive proenzyme. Formation of the active enzyme involves a self-maturation process in which the active site pyruvoyl group is generated from an internal serine residue via an autocatalytic post-translational modification. Two non-identical subunits are generated from the proenzyme in this reaction, and the pyruvate is formed at the N-terminus of the alpha chain, which is derived from the carboxyl end of the proenzyme. The post-translation cleavage follows an unusual pathway, termed non-hydrolytic serinolysis, in which the side chain hydroxyl group of the serine supplies its oxygen atom to form the C-terminus of the beta chain, while the remainder of the serine residue undergoes an oxidative deamination to produce ammonia and the pyruvoyl group blocking the N-terminus of the alpha chain.

The enzyme catalyses S-adenosyl-L-methionine + H(+) = S-adenosyl 3-(methylsulfanyl)propylamine + CO2. Its pathway is amine and polyamine biosynthesis; S-adenosylmethioninamine biosynthesis; S-adenosylmethioninamine from S-adenosyl-L-methionine: step 1/1. Its function is as follows. Catalyzes the decarboxylation of S-adenosylmethionine to S-adenosylmethioninamine (dcAdoMet), the propylamine donor required for the synthesis of the polyamines spermine and spermidine from the diamine putrescine. The protein is S-adenosylmethionine decarboxylase proenzyme of Saccharolobus islandicus (strain L.S.2.15 / Lassen #1) (Sulfolobus islandicus).